A 236-amino-acid chain; its full sequence is Phosphoribosylaminoimidazole-succinocarboxamide synthase (236 aa).

It belongs to the SAICAR synthetase family.

The catalysed reaction is 5-amino-1-(5-phospho-D-ribosyl)imidazole-4-carboxylate + L-aspartate + ATP = (2S)-2-[5-amino-1-(5-phospho-beta-D-ribosyl)imidazole-4-carboxamido]succinate + ADP + phosphate + 2 H(+). It functions in the pathway purine metabolism; IMP biosynthesis via de novo pathway; 5-amino-1-(5-phospho-D-ribosyl)imidazole-4-carboxamide from 5-amino-1-(5-phospho-D-ribosyl)imidazole-4-carboxylate: step 1/2. The sequence is that of Phosphoribosylaminoimidazole-succinocarboxamide synthase from Streptococcus equi subsp. zooepidemicus (strain MGCS10565).